Here is a 199-residue protein sequence, read N- to C-terminus: UPF0301 protein Ajs_3573 (199 aa).

Belongs to the UPF0301 (AlgH) family.

The polypeptide is UPF0301 protein Ajs_3573 (Acidovorax sp. (strain JS42)).